A 509-amino-acid chain; its full sequence is Transcription factor SOX-9 (509 aa).

2 disordered regions span residues M1–D67 and R160–V273. Over residues S30–S41 the composition is skewed to low complexity. The span at D42–T52 shows a compositional bias: polar residues. 2 stretches are compositionally biased toward basic and acidic residues: residues G56–D67 and R160–Y174. A dimerization (DIM) region spans residues E63–P103. A PQA region spans residues E63–P103. A Phosphoserine modification is found at S64. A DNA-binding region (HMG box) is located at residues V105 to K173. S211 bears the Phosphoserine mark. The tract at residues P224–P307 is transactivation domain (TAM). Short sequence motifs (9aaTAD) lie at residues I275–S284 and D290–L298. A disordered region spans residues S330–P415. Residues A341–Q376 are compositionally biased toward pro residues. Positions H380–P415 are enriched in polar residues. A transactivation domain (TAC) region spans residues R394 to P509. K398 is covalently cross-linked (Glycyl lysine isopeptide (Lys-Gly) (interchain with G-Cter in ubiquitin)). Residues T460 to Y468 carry the 9aaTAD 3 motif. Residues P479–P509 are disordered. Residues G485–P509 show a composition bias toward polar residues.

In terms of assembly, homodimer; homodimerization is required for activity. Interacts (via C-terminus) with ZNF219; forming a complex that binds to the COL2A1 promoter and activates COL2A1 expression. Interacts with DDRGK1. Interacts with EP300/p300. Interacts with beta-catenin (CTNNB1); inhibiting CTNNB1 activity by competing with the binding sites of TCF/LEF within CTNNB1. In terms of processing, acetylated; acetylation impairs nuclear localization and ability to transactivate expression of target genes. Deacetylated by SIRT1. Phosphorylation at Ser-64 and Ser-211 by PKA increases transcriptional activity and may help delay chondrocyte maturation downstream of PTHLH/PTHrP signaling. Phosphorylation at either Ser-64 or Ser-211 is required for sumoylation, but phosphorylation is not dependent on sumoylation. Phosphorylated on tyrosine residues; tyrosine dephosphorylation by PTPN11/SHP2 blocks SOX9 phosphorylation by PKA and subsequent SUMOylation. Post-translationally, ubiquitinated; ubiquitination leads to proteasomal degradation and is negatively regulated by DDRGK1. In terms of processing, sumoylated; phosphorylation at either Ser-64 or Ser-211 is required for sumoylation. Sumoylation is induced by BMP signaling pathway.

The protein resides in the nucleus. Transcription factor that plays a key role in chondrocytes differentiation and skeletal development. Specifically binds the 5'-ACAAAG-3' DNA motif present in enhancers and super-enhancers and promotes expression of genes important for chondrogenesis, including cartilage matrix protein-coding genes COL2A1, COL4A2, COL9A1, COL11A2 and ACAN, SOX5 and SOX6. Also binds to some promoter regions. Plays a central role in successive steps of chondrocyte differentiation. Absolutely required for precartilaginous condensation, the first step in chondrogenesis during which skeletal progenitors differentiate into prechondrocytes. Together with SOX5 and SOX6, required for overt chondrogenesis when condensed prechondrocytes differentiate into early stage chondrocytes, the second step in chondrogenesis. Later, required to direct hypertrophic maturation and block osteoblast differentiation of growth plate chondrocytes: maintains chondrocyte columnar proliferation, delays prehypertrophy and then prevents osteoblastic differentiation of chondrocytes by lowering beta-catenin (CTNNB1) signaling and RUNX2 expression. Also required for chondrocyte hypertrophy, both indirectly, by keeping the lineage fate of chondrocytes, and directly, by remaining present in upper hypertrophic cells and transactivating COL10A1 along with MEF2C. Low lipid levels are the main nutritional determinant for chondrogenic commitment of skeletal progenitor cells: when lipids levels are low, FOXO (FOXO1 and FOXO3) transcription factors promote expression of SOX9, which induces chondrogenic commitment and suppresses fatty acid oxidation. Mechanistically, helps, but is not required, to remove epigenetic signatures of transcriptional repression and deposit active promoter and enhancer marks at chondrocyte-specific genes. Acts in cooperation with the Hedgehog pathway-dependent GLI (GLI1 and GLI3) transcription factors. In addition to cartilage development, also acts as a regulator of proliferation and differentiation in epithelial stem/progenitor cells: involved in the lung epithelium during branching morphogenesis, by balancing proliferation and differentiation and regulating the extracellular matrix. Controls epithelial branching during kidney development. This Homo sapiens (Human) protein is Transcription factor SOX-9.